We begin with the raw amino-acid sequence, 478 residues long: uncharacterized protein (478 aa).

Residues 5–85 (KRIYVGGLSS…SKLRIEEARP (81 aa)) form the RRM domain. S207 and S308 each carry phosphoserine.

Its subcellular location is the nucleus. It localises to the nucleolus. This is an uncharacterized protein from Schizosaccharomyces pombe (strain 972 / ATCC 24843) (Fission yeast).